The sequence spans 54 residues: Large ribosomal subunit protein bL33 (54 aa).

It belongs to the bacterial ribosomal protein bL33 family.

In Stenotrophomonas maltophilia (strain R551-3), this protein is Large ribosomal subunit protein bL33.